Consider the following 165-residue polypeptide: LIM domain transcription factor LMO4.2 (165 aa).

LIM zinc-binding domains lie at 21–83 and 85–147; these read KRCA…LFGN and GACS…ALIN.

Its function is as follows. Acts as a positive cofactor of GATA transcription factors to establish the identity of the ventral mesoderm during gastrulation. Down-regulation in the dorsal mesoderm is necessary for the proper formation of this territory since, when present, lmo4 may bind ldb1 and restrict the availability of this cofactor for Spemman organizer transcription factors. At neurula stages, suppresses primary neuron differentiation and modulates gene expression at the Isthmic Organizer of the midbrain-hindbrain boundary. The protein is LIM domain transcription factor LMO4.2 (lmo4.2) of Xenopus tropicalis (Western clawed frog).